The following is a 531-amino-acid chain: Cytosolic Fe-S cluster assembly factor NAR1 (531 aa).

Positions 20, 72, 75, 78, 184, and 239 each coordinate [4Fe-4S] cluster. Residues 395–426 (TSSTTTTKTNPLVARRKARLSSKRSESGAQDV) form a disordered region. [4Fe-4S] cluster contacts are provided by Cys-442 and Cys-446.

It belongs to the NARF family.

In terms of biological role, component of the cytosolic Fe/S protein assembly machinery. Required for maturation of extramitochondrial Fe/S proteins. May play a role in the transfer of pre-assembled Fe/S clusters to target apoproteins. The protein is Cytosolic Fe-S cluster assembly factor NAR1 (NAR1) of Meyerozyma guilliermondii (strain ATCC 6260 / CBS 566 / DSM 6381 / JCM 1539 / NBRC 10279 / NRRL Y-324) (Yeast).